Here is a 479-residue protein sequence, read N- to C-terminus: ATP synthase subunit beta (479 aa).

Residue 158–165 (GGAGLGKT) coordinates ATP.

The protein belongs to the ATPase alpha/beta chains family. F-type ATPases have 2 components, CF(1) - the catalytic core - and CF(0) - the membrane proton channel. CF(1) has five subunits: alpha(3), beta(3), gamma(1), delta(1), epsilon(1). CF(0) has three main subunits: a(1), b(2) and c(9-12). The alpha and beta chains form an alternating ring which encloses part of the gamma chain. CF(1) is attached to CF(0) by a central stalk formed by the gamma and epsilon chains, while a peripheral stalk is formed by the delta and b chains.

It is found in the cell inner membrane. It carries out the reaction ATP + H2O + 4 H(+)(in) = ADP + phosphate + 5 H(+)(out). Functionally, produces ATP from ADP in the presence of a proton gradient across the membrane. The catalytic sites are hosted primarily by the beta subunits. This Rhodopirellula baltica (strain DSM 10527 / NCIMB 13988 / SH1) protein is ATP synthase subunit beta.